A 501-amino-acid polypeptide reads, in one-letter code: Chromosomal replication initiator protein DnaA (501 aa).

A domain I, interacts with DnaA modulators region spans residues 1 to 90; the sequence is MSVELWQQCV…KRSSAPRAAP (90 aa). Residues 91–164 are domain II; the sequence is NAPLAAAASQ…QVEGALKHTS (74 aa). Positions 103-121 are enriched in low complexity; it reads AAPVASTPAPAPSKSSAKK. The segment at 103-150 is disordered; it reads AAPVASTPAPAPSKSSAKKNAAENEEPSRDSFDPMAGASSQQAPIRAE. A compositionally biased stretch (basic and acidic residues) spans 122-134; it reads NAAENEEPSRDSF. The interval 165–381 is domain III, AAA+ region; it reads YLNRTFTFEN…GALKRVIAHS (217 aa). Residues glycine 209, glycine 211, lysine 212, and threonine 213 each coordinate ATP. The tract at residues 382 to 501 is domain IV, binds dsDNA; it reads HFMGRDITIE…YKNLLRTLTT (120 aa).

This sequence belongs to the DnaA family. In terms of assembly, oligomerizes as a right-handed, spiral filament on DNA at oriC.

It localises to the cytoplasm. In terms of biological role, plays an essential role in the initiation and regulation of chromosomal replication. ATP-DnaA binds to the origin of replication (oriC) to initiate formation of the DNA replication initiation complex once per cell cycle. Binds the DnaA box (a 9 base pair repeat at the origin) and separates the double-stranded (ds)DNA. Forms a right-handed helical filament on oriC DNA; dsDNA binds to the exterior of the filament while single-stranded (ss)DNA is stabiized in the filament's interior. The ATP-DnaA-oriC complex binds and stabilizes one strand of the AT-rich DNA unwinding element (DUE), permitting loading of DNA polymerase. After initiation quickly degrades to an ADP-DnaA complex that is not apt for DNA replication. Binds acidic phospholipids. The sequence is that of Chromosomal replication initiator protein DnaA from Pseudomonas fluorescens (strain SBW25).